Here is a 101-residue protein sequence, read N- to C-terminus: Urease subunit beta (101 aa).

This sequence belongs to the urease beta subunit family. Heterotrimer of UreA (gamma), UreB (beta) and UreC (alpha) subunits. Three heterotrimers associate to form the active enzyme.

It is found in the cytoplasm. The enzyme catalyses urea + 2 H2O + H(+) = hydrogencarbonate + 2 NH4(+). Its pathway is nitrogen metabolism; urea degradation; CO(2) and NH(3) from urea (urease route): step 1/1. This chain is Urease subunit beta, found in Cereibacter sphaeroides (strain ATCC 17025 / ATH 2.4.3) (Rhodobacter sphaeroides).